The chain runs to 420 residues: MKIHLDKSLPGGNIAVPSSKSYTIRGLIAAAQANGQSHIISPLIADDTLATRQVLSGLGININTDTGSESWEITGNTFKAPSGNLFCRESAATLRFMSAVCARLPFECHLLAGHSLMRRPMLPLIQALHQLGIEIETRGNTTVINGQVITRSKVSLPGNISSQYVSALMLMAPACTHGLEIHLATPPASLPYLKMTKQTLGSFGIKVHSSIDWQEISIPPQPYLPARYRVEGDWSSASSFLALGAIAAPVFISNLDTDSFQADRIMIKFLAEMGAEIESGQNWVKVNPKPLSGINADLTHSIDLLPALAVAAACAKGQSILSGVRQARIKESNRIRAVSQGLSAMGINIIEEDDRLIIEGGQPKGAEIDSFGDHRIAMAFGILGSVVGETHISDAECVTKTYPDFWKNLESLGGKVTQDV.

Lys-20, Ser-21, and Arg-25 together coordinate 3-phosphoshikimate. Residue Lys-20 participates in phosphoenolpyruvate binding. Arg-119 serves as a coordination point for phosphoenolpyruvate. Residues Ser-161, Ser-162, Gln-163, Ser-189, Asp-303, Gln-326, and Lys-330 each contribute to the 3-phosphoshikimate site. Gln-163 is a phosphoenolpyruvate binding site. Asp-303 serves as the catalytic Proton acceptor. Arg-334, Arg-375, and Lys-400 together coordinate phosphoenolpyruvate.

The protein belongs to the EPSP synthase family. In terms of assembly, monomer.

It localises to the cytoplasm. It carries out the reaction 3-phosphoshikimate + phosphoenolpyruvate = 5-O-(1-carboxyvinyl)-3-phosphoshikimate + phosphate. It functions in the pathway metabolic intermediate biosynthesis; chorismate biosynthesis; chorismate from D-erythrose 4-phosphate and phosphoenolpyruvate: step 6/7. Its function is as follows. Catalyzes the transfer of the enolpyruvyl moiety of phosphoenolpyruvate (PEP) to the 5-hydroxyl of shikimate-3-phosphate (S3P) to produce enolpyruvyl shikimate-3-phosphate and inorganic phosphate. The polypeptide is 3-phosphoshikimate 1-carboxyvinyltransferase (Dehalococcoides mccartyi (strain ATCC BAA-2100 / JCM 16839 / KCTC 5957 / BAV1)).